The following is a 366-amino-acid chain: Aminomethyltransferase (366 aa).

It belongs to the GcvT family. As to quaternary structure, the glycine cleavage system is composed of four proteins: P, T, L and H.

It carries out the reaction N(6)-[(R)-S(8)-aminomethyldihydrolipoyl]-L-lysyl-[protein] + (6S)-5,6,7,8-tetrahydrofolate = N(6)-[(R)-dihydrolipoyl]-L-lysyl-[protein] + (6R)-5,10-methylene-5,6,7,8-tetrahydrofolate + NH4(+). Its function is as follows. The glycine cleavage system catalyzes the degradation of glycine. The sequence is that of Aminomethyltransferase from Bacillus cereus (strain B4264).